Consider the following 421-residue polypeptide: D-amino acid dehydrogenase (421 aa).

Residue 3-17 (VIVLGSGVIGVASAY) participates in FAD binding.

The protein belongs to the DadA oxidoreductase family. The cofactor is FAD.

The catalysed reaction is a D-alpha-amino acid + A + H2O = a 2-oxocarboxylate + AH2 + NH4(+). It functions in the pathway amino-acid degradation; D-alanine degradation; NH(3) and pyruvate from D-alanine: step 1/1. Functionally, oxidative deamination of D-amino acids. This chain is D-amino acid dehydrogenase, found in Acinetobacter baumannii (strain AB307-0294).